The chain runs to 280 residues: 2,3,4,5-tetrahydropyridine-2,6-dicarboxylate N-succinyltransferase (280 aa).

2 residues coordinate substrate: R109 and D146.

This sequence belongs to the transferase hexapeptide repeat family. In terms of assembly, homotrimer.

It is found in the cytoplasm. The enzyme catalyses (S)-2,3,4,5-tetrahydrodipicolinate + succinyl-CoA + H2O = (S)-2-succinylamino-6-oxoheptanedioate + CoA. The protein operates within amino-acid biosynthesis; L-lysine biosynthesis via DAP pathway; LL-2,6-diaminopimelate from (S)-tetrahydrodipicolinate (succinylase route): step 1/3. The protein is 2,3,4,5-tetrahydropyridine-2,6-dicarboxylate N-succinyltransferase of Blochmanniella floridana.